A 344-amino-acid polypeptide reads, in one-letter code: tRNA N6-adenosine threonylcarbamoyltransferase (344 aa).

Fe cation is bound by residues histidine 119 and histidine 123. Residues 141 to 145, aspartate 174, glycine 187, aspartate 191, and asparagine 280 contribute to the substrate site; that span reads VVSGG. Aspartate 310 provides a ligand contact to Fe cation.

Belongs to the KAE1 / TsaD family. The cofactor is Fe(2+).

It localises to the cytoplasm. It catalyses the reaction L-threonylcarbamoyladenylate + adenosine(37) in tRNA = N(6)-L-threonylcarbamoyladenosine(37) in tRNA + AMP + H(+). In terms of biological role, required for the formation of a threonylcarbamoyl group on adenosine at position 37 (t(6)A37) in tRNAs that read codons beginning with adenine. Is involved in the transfer of the threonylcarbamoyl moiety of threonylcarbamoyl-AMP (TC-AMP) to the N6 group of A37, together with TsaE and TsaB. TsaD likely plays a direct catalytic role in this reaction. The sequence is that of tRNA N6-adenosine threonylcarbamoyltransferase from Listeria welshimeri serovar 6b (strain ATCC 35897 / DSM 20650 / CCUG 15529 / CIP 8149 / NCTC 11857 / SLCC 5334 / V8).